Reading from the N-terminus, the 252-residue chain is NLP effector protein Pc118356 (252 aa).

The N-terminal stretch at 1–17 (MALTVLAATALTALIMG) is a signal peptide. N-linked (GlcNAc...) asparagine glycans are attached at residues Asn-20 and Asn-67. Positions 121-127 (QDRHFWE) match the Hepta-peptide GHRHDWE motif motif. The N-linked (GlcNAc...) asparagine glycan is linked to Asn-166.

Belongs to the Necrosis inducing protein (NPP1) family.

It localises to the secreted. Its function is as follows. Secreted effector that contributes strongly to virulence during infection by P.capsici. The chain is NLP effector protein Pc118356 from Phytophthora capsici.